Here is a 934-residue protein sequence, read N- to C-terminus: AP-2 complex subunit alpha (934 aa).

Residues 623-670 (RVPENAEIRETKSPVPNSHNNAHSNAQTNHTSSANNANASSDLLGLST) form a disordered region. Polar residues predominate over residues 636-645 (PVPNSHNNAH). A compositionally biased stretch (low complexity) spans 646–663 (SNAQTNHTSSANNANASS).

This sequence belongs to the adapter complexes large subunit family. Adaptor protein complex 2 (AP-2) is a heterotetramer composed of two large adaptins (alpha-type and beta-type subunits), a medium adaptin (mu-type subunit AP50) and a small adaptin (sigma-type subunit AP17).

The protein resides in the cell membrane. Its subcellular location is the membrane. It is found in the coated pit. Its function is as follows. Adaptins are components of the adapter complexes which link clathrin to receptors in coated vesicles. Clathrin-associated protein complexes are believed to interact with the cytoplasmic tails of membrane proteins, leading to their selection and concentration. Alpha adaptin is a subunit of the plasma membrane adapter. In Anopheles gambiae (African malaria mosquito), this protein is AP-2 complex subunit alpha.